The primary structure comprises 565 residues: Sulfite reductase [NADPH] hemoprotein beta-component (565 aa).

Positions 429, 435, 474, and 478 each coordinate [4Fe-4S] cluster. Cysteine 478 is a siroheme binding site.

This sequence belongs to the nitrite and sulfite reductase 4Fe-4S domain family. Alpha(8)-beta(8). The alpha component is a flavoprotein, the beta component is a hemoprotein. Siroheme serves as cofactor. The cofactor is [4Fe-4S] cluster.

The catalysed reaction is hydrogen sulfide + 3 NADP(+) + 3 H2O = sulfite + 3 NADPH + 4 H(+). It participates in sulfur metabolism; hydrogen sulfide biosynthesis; hydrogen sulfide from sulfite (NADPH route): step 1/1. Functionally, component of the sulfite reductase complex that catalyzes the 6-electron reduction of sulfite to sulfide. This is one of several activities required for the biosynthesis of L-cysteine from sulfate. This Pseudoalteromonas translucida (strain TAC 125) protein is Sulfite reductase [NADPH] hemoprotein beta-component.